Consider the following 420-residue polypeptide: Histidine--tRNA ligase (420 aa).

Belongs to the class-II aminoacyl-tRNA synthetase family. In terms of assembly, homodimer.

The protein resides in the cytoplasm. The enzyme catalyses tRNA(His) + L-histidine + ATP = L-histidyl-tRNA(His) + AMP + diphosphate + H(+). The protein is Histidine--tRNA ligase of Mycobacterium marinum (strain ATCC BAA-535 / M).